Reading from the N-terminus, the 191-residue chain is Protein Ves (191 aa).

The protein belongs to the Ves family.

The sequence is that of Protein Ves from Escherichia coli O8 (strain IAI1).